Reading from the N-terminus, the 498-residue chain is Galactose-1-phosphate uridylyltransferase (498 aa).

The protein belongs to the galactose-1-phosphate uridylyltransferase type 2 family.

It is found in the cytoplasm. The enzyme catalyses alpha-D-galactose 1-phosphate + UDP-alpha-D-glucose = alpha-D-glucose 1-phosphate + UDP-alpha-D-galactose. It functions in the pathway carbohydrate metabolism; galactose metabolism. In Staphylococcus carnosus (strain TM300), this protein is Galactose-1-phosphate uridylyltransferase.